Here is a 135-residue protein sequence, read N- to C-terminus: UPF0102 protein PGN_1801 (135 aa).

The protein belongs to the UPF0102 family.

In Porphyromonas gingivalis (strain ATCC 33277 / DSM 20709 / CIP 103683 / JCM 12257 / NCTC 11834 / 2561), this protein is UPF0102 protein PGN_1801.